Here is a 266-residue protein sequence, read N- to C-terminus: Undecaprenyl-diphosphatase (266 aa).

A run of 8 helical transmembrane segments spans residues 1–21 (MDTF…FLPI), 39–59 (QGLS…VIYF), 87–107 (WWII…KDFI), 114–134 (AEVI…ADKM), 149–169 (ALLI…RSGA), 183–203 (AAAR…AILV), 218–238 (ALIL…HYFL), and 246–266 (MTPF…FIFF).

The protein belongs to the UppP family.

It localises to the cell inner membrane. It carries out the reaction di-trans,octa-cis-undecaprenyl diphosphate + H2O = di-trans,octa-cis-undecaprenyl phosphate + phosphate + H(+). Its function is as follows. Catalyzes the dephosphorylation of undecaprenyl diphosphate (UPP). Confers resistance to bacitracin. The polypeptide is Undecaprenyl-diphosphatase (Shewanella baltica (strain OS223)).